A 415-amino-acid polypeptide reads, in one-letter code: Probable glucan 1,3-beta-glucosidase A (415 aa).

The first 22 residues, 1–22, serve as a signal peptide directing secretion; that stretch reads MLSRLSQTALVALSLMTVLTEA. Residue Glu210 is the Proton donor of the active site. 2 disulfide bridges follow: Cys290/Cys414 and Cys315/Cys341. Residue Glu307 is the Nucleophile of the active site. The segment at 335 to 359 is disordered; that stretch reads SPRYGDCGNKRQGSSSGLSEQERSD.

It belongs to the glycosyl hydrolase 5 (cellulase A) family. In terms of assembly, monomer. Requires Mn(2+) as cofactor.

The protein resides in the secreted. The catalysed reaction is Successive hydrolysis of beta-D-glucose units from the non-reducing ends of (1-&gt;3)-beta-D-glucans, releasing alpha-glucose.. Functionally, beta-glucanases participate in the metabolism of beta-glucan, the main structural component of the cell wall. It could also function biosynthetically as a transglycosylase. This Aspergillus clavatus (strain ATCC 1007 / CBS 513.65 / DSM 816 / NCTC 3887 / NRRL 1 / QM 1276 / 107) protein is Probable glucan 1,3-beta-glucosidase A (exgA).